Reading from the N-terminus, the 208-residue chain is Small ribosomal subunit protein uS4 (208 aa).

One can recognise an S4 RNA-binding domain in the interval 98–160; it reads CRLDNVVYRM…AKKQSRIQLA (63 aa).

Belongs to the universal ribosomal protein uS4 family. In terms of assembly, part of the 30S ribosomal subunit. Contacts protein S5. The interaction surface between S4 and S5 is involved in control of translational fidelity.

In terms of biological role, one of the primary rRNA binding proteins, it binds directly to 16S rRNA where it nucleates assembly of the body of the 30S subunit. Functionally, with S5 and S12 plays an important role in translational accuracy. In Vesicomyosocius okutanii subsp. Calyptogena okutanii (strain HA), this protein is Small ribosomal subunit protein uS4.